Here is a 317-residue protein sequence, read N- to C-terminus: MASLGRLLCAWVLLLCGLASPGLSGSYERGSKRPIIGIIMQECYGNMTKLGRFYIAASYVKFIESAGARVVPIRLDLNDAQYETLFRSINGVLLPGGGANLTHSGYSRVAKIFFTKALESFDNGDYFPVWGTCLGLEELSVLVSNDNLLTLTNTSSVKLPLNFTRDSKQSRMFRNLPEELLNSLASENLTANFHKWSLSVKNFTENEKLKKFFNILTVNTDGKTEFISSMEGYKYPIYAVQWHPEKAPFEWKKLRGISHAPNAVKTSFYLAKFFISEALKNDHHFENELEETESLIYQFCPVYTGNISSFQQAYMFN.

A signal peptide spans 1–24 (MASLGRLLCAWVLLLCGLASPGLS). The 293-residue stretch at 25–317 (GSYERGSKRP…SSFQQAYMFN (293 aa)) folds into the Gamma-glutamyl hydrolase domain. N-linked (GlcNAc...) asparagine glycans are attached at residues N46 and N100. C133 (nucleophile) is an active-site residue. 4 N-linked (GlcNAc...) asparagine glycosylation sites follow: N153, N162, N188, and N202. H243 serves as the catalytic Proton donor. N-linked (GlcNAc...) asparagine glycosylation occurs at N306.

Belongs to the peptidase C26 family. Homodimer.

The protein resides in the secreted. Its subcellular location is the extracellular space. It is found in the lysosome. The protein localises to the melanosome. It catalyses the reaction (6S)-5,6,7,8-tetrahydrofolyl-(gamma-L-Glu)(n) + (n-1) H2O = (6S)-5,6,7,8-tetrahydrofolate + (n-1) L-glutamate. With respect to regulation, activity is altered by insulin and estrogen. Its function is as follows. Hydrolyzes the polyglutamate sidechains of pteroylpolyglutamates. Progressively removes gamma-glutamyl residues from pteroylpoly-gamma-glutamate to yield pteroyl-alpha-glutamate (folic acid) and free glutamate. May play an important role in the bioavailability of dietary pteroylpolyglutamates and in the metabolism of pteroylpolyglutamates and antifolates. Exhibits either endo- or exopeptidase activity depending upon the tissue of origin. When secreted, it acts primarily as an endopeptidase. The chain is Gamma-glutamyl hydrolase (Ggh) from Rattus norvegicus (Rat).